Here is a 224-residue protein sequence, read N- to C-terminus: tRNA (guanine-N(7)-)-methyltransferase (224 aa).

The S-adenosyl-L-methionine site is built by glutamate 57, aspartate 82, and aspartate 109. Position 167 (aspartate 167) interacts with substrate.

The protein belongs to the class I-like SAM-binding methyltransferase superfamily. TrmB family.

The enzyme catalyses guanosine(46) in tRNA + S-adenosyl-L-methionine = N(7)-methylguanosine(46) in tRNA + S-adenosyl-L-homocysteine. The protein operates within tRNA modification; N(7)-methylguanine-tRNA biosynthesis. Its function is as follows. Catalyzes the formation of N(7)-methylguanine at position 46 (m7G46) in tRNA. This is tRNA (guanine-N(7)-)-methyltransferase from Chloroflexus aggregans (strain MD-66 / DSM 9485).